A 142-amino-acid chain; its full sequence is Large ribosomal subunit protein uL13 (142 aa).

The protein belongs to the universal ribosomal protein uL13 family. Part of the 50S ribosomal subunit.

In terms of biological role, this protein is one of the early assembly proteins of the 50S ribosomal subunit, although it is not seen to bind rRNA by itself. It is important during the early stages of 50S assembly. The protein is Large ribosomal subunit protein uL13 of Yersinia enterocolitica serotype O:8 / biotype 1B (strain NCTC 13174 / 8081).